A 124-amino-acid polypeptide reads, in one-letter code: Small ribosomal subunit protein uS12 (124 aa).

The tract at residues 1–32 (MPTIQQLVRKGREDKVVKTKTPALKGSPQRRG) is disordered. Asp-89 carries the 3-methylthioaspartic acid modification. The interval 105–124 (QGVKNRKQARSRYGAKKEKS) is disordered. The segment covering 108–118 (KNRKQARSRYG) has biased composition (basic residues).

It belongs to the universal ribosomal protein uS12 family. Part of the 30S ribosomal subunit. Contacts proteins S8 and S17. May interact with IF1 in the 30S initiation complex.

In terms of biological role, with S4 and S5 plays an important role in translational accuracy. Functionally, interacts with and stabilizes bases of the 16S rRNA that are involved in tRNA selection in the A site and with the mRNA backbone. Located at the interface of the 30S and 50S subunits, it traverses the body of the 30S subunit contacting proteins on the other side and probably holding the rRNA structure together. The combined cluster of proteins S8, S12 and S17 appears to hold together the shoulder and platform of the 30S subunit. This Kineococcus radiotolerans (strain ATCC BAA-149 / DSM 14245 / SRS30216) protein is Small ribosomal subunit protein uS12.